Consider the following 92-residue polypeptide: Large ribosomal subunit protein bL27 (92 aa).

Positions 1-26 (MAHKKGASSSSNGRDSESKRLGVKRF) are disordered.

Belongs to the bacterial ribosomal protein bL27 family.

This is Large ribosomal subunit protein bL27 from Corynebacterium aurimucosum (strain ATCC 700975 / DSM 44827 / CIP 107346 / CN-1) (Corynebacterium nigricans).